A 466-amino-acid chain; its full sequence is tRNA modification GTPase MnmE (466 aa).

Positions 23, 86, and 125 each coordinate (6S)-5-formyl-5,6,7,8-tetrahydrofolate. Positions G221 to N388 constitute a TrmE-type G domain. N231 lines the K(+) pocket. Residues N231 to T236, S250 to T256, and D275 to G278 contribute to the GTP site. S235 serves as a coordination point for Mg(2+). 3 residues coordinate K(+): S250, I252, and T255. T256 contributes to the Mg(2+) binding site. Residue K466 participates in (6S)-5-formyl-5,6,7,8-tetrahydrofolate binding.

This sequence belongs to the TRAFAC class TrmE-Era-EngA-EngB-Septin-like GTPase superfamily. TrmE GTPase family. In terms of assembly, homodimer. Heterotetramer of two MnmE and two MnmG subunits. K(+) serves as cofactor.

It localises to the cytoplasm. In terms of biological role, exhibits a very high intrinsic GTPase hydrolysis rate. Involved in the addition of a carboxymethylaminomethyl (cmnm) group at the wobble position (U34) of certain tRNAs, forming tRNA-cmnm(5)s(2)U34. This chain is tRNA modification GTPase MnmE, found in Flavobacterium johnsoniae (strain ATCC 17061 / DSM 2064 / JCM 8514 / BCRC 14874 / CCUG 350202 / NBRC 14942 / NCIMB 11054 / UW101) (Cytophaga johnsonae).